A 4388-amino-acid polypeptide reads, in one-letter code: Intermembrane lipid transfer protein VPS13D (4388 aa).

One can recognise a Chorein N-terminal domain in the interval 2–115 (LEGLVAWVLN…ERERKKALLQ (114 aa)). Residue Ser-663 is modified to Phosphoserine. Residues 745–796 (QDNSRRKSRDGSASEETQFSDDEYKTPLATPPNTPPPESSSSNGEKTPPFSG) form a disordered region. The span at 747–756 (NSRRKSRDGS) shows a compositional bias: basic and acidic residues. A compositionally biased stretch (pro residues) spans 773 to 782 (ATPPNTPPPE). Ser-1034, Ser-1038, Ser-1042, Ser-1138, and Ser-1341 each carry phosphoserine. The segment at 1563–1582 (ASATSSPCPDSPLPPLSTCG) is disordered. Phosphoserine is present on residues Ser-1598, Ser-1603, and Ser-1699. 3 disordered regions span residues 1741–1771 (RPTS…VDEP), 2070–2108 (QDKE…QFTM), and 2122–2145 (FVPS…ESSS). Thr-1761 is modified (phosphothreonine). Residue Ser-1765 is modified to Phosphoserine. Residues 2123–2144 (VPSTSTKQQGPQPTLSVGQESS) are compositionally biased toward polar residues. Phosphoserine occurs at positions 2435, 2671, 2861, 2864, and 2983. The UBA domain maps to 2633–2676 (TLDPVLELQLARLQELGFSMDDCRKALLACQGQLKKAASWLFKN). The region spanning 3276–3558 (LKIFISAPYW…LDYAWDEPTL (283 aa)) is the SHR-BD domain. Lys-3524 bears the N6-acetyllysine mark.

This sequence belongs to the VPS13 family. In terms of tissue distribution, widely expressed.

In terms of biological role, mediates the transfer of lipids between membranes at organelle contact sites. Functions in promoting mitochondrial clearance by mitochondrial autophagy (mitophagy), also possibly by positively regulating mitochondrial fission. Mitophagy plays an important role in regulating cell health and mitochondrial size and homeostasis. The chain is Intermembrane lipid transfer protein VPS13D from Homo sapiens (Human).